The sequence spans 265 residues: Undecaprenyl-diphosphatase (265 aa).

A run of 8 helical transmembrane segments spans residues 7-27 (VIVS…PISS), 45-65 (TKIL…YFFH), 86-106 (LHIL…YKKI), 108-128 (LLFN…FLLI), 145-165 (ISLL…YPGF), 186-206 (IEFS…YDFI), 214-234 (ILDL…SILC), and 245-265 (TSLI…YFIN).

Belongs to the UppP family.

The protein resides in the cell membrane. It carries out the reaction di-trans,octa-cis-undecaprenyl diphosphate + H2O = di-trans,octa-cis-undecaprenyl phosphate + phosphate + H(+). Its function is as follows. Catalyzes the dephosphorylation of undecaprenyl diphosphate (UPP). Confers resistance to bacitracin. The protein is Undecaprenyl-diphosphatase of Buchnera aphidicola subsp. Acyrthosiphon pisum (strain 5A).